The primary structure comprises 252 residues: 2-succinyl-6-hydroxy-2,4-cyclohexadiene-1-carboxylate synthase (252 aa).

The protein belongs to the AB hydrolase superfamily. MenH family. As to quaternary structure, monomer.

It catalyses the reaction 5-enolpyruvoyl-6-hydroxy-2-succinyl-cyclohex-3-ene-1-carboxylate = (1R,6R)-6-hydroxy-2-succinyl-cyclohexa-2,4-diene-1-carboxylate + pyruvate. It functions in the pathway quinol/quinone metabolism; 1,4-dihydroxy-2-naphthoate biosynthesis; 1,4-dihydroxy-2-naphthoate from chorismate: step 3/7. The protein operates within quinol/quinone metabolism; menaquinone biosynthesis. Catalyzes a proton abstraction reaction that results in 2,5-elimination of pyruvate from 2-succinyl-5-enolpyruvyl-6-hydroxy-3-cyclohexene-1-carboxylate (SEPHCHC) and the formation of 2-succinyl-6-hydroxy-2,4-cyclohexadiene-1-carboxylate (SHCHC). The polypeptide is 2-succinyl-6-hydroxy-2,4-cyclohexadiene-1-carboxylate synthase (Salmonella typhimurium (strain LT2 / SGSC1412 / ATCC 700720)).